The chain runs to 64 residues: DNA-directed RNA polymerase subunit omega (64 aa).

The protein belongs to the RNA polymerase subunit omega family. The RNAP catalytic core consists of 2 alpha, 1 beta, 1 beta' and 1 omega subunit. When a sigma factor is associated with the core the holoenzyme is formed, which can initiate transcription.

The enzyme catalyses RNA(n) + a ribonucleoside 5'-triphosphate = RNA(n+1) + diphosphate. Functionally, promotes RNA polymerase assembly. Latches the N- and C-terminal regions of the beta' subunit thereby facilitating its interaction with the beta and alpha subunits. The protein is DNA-directed RNA polymerase subunit omega of Oceanobacillus iheyensis (strain DSM 14371 / CIP 107618 / JCM 11309 / KCTC 3954 / HTE831).